A 414-amino-acid chain; its full sequence is Sex comb on midleg-like protein 4 (414 aa).

2 positions are modified to phosphoserine: S55 and S65. Residues H257 to D276 are compositionally biased toward polar residues. Residues H257–P343 form a disordered region. Low complexity predominate over residues A284–G304. The 67-residue stretch at G288–F354 folds into the SAM domain. The segment covering P312–A332 has biased composition (polar residues).

The protein belongs to the SCM family.

The protein resides in the nucleus. In terms of biological role, putative Polycomb group (PcG) protein. PcG proteins act by forming multiprotein complexes, which are required to maintain the transcriptionally repressive state of homeotic genes throughout development. The protein is Sex comb on midleg-like protein 4 (SCML4) of Homo sapiens (Human).